The primary structure comprises 380 residues: Putative 8-amino-7-oxononanoate synthase (380 aa).

Arg-18 is a substrate binding site. Position 105–106 (Gly-105–Tyr-106) interacts with pyridoxal 5'-phosphate. His-130 contacts substrate. Residues Ser-178, Asp-204–His-207, and Thr-235–Lys-238 contribute to the pyridoxal 5'-phosphate site. The residue at position 238 (Lys-238) is an N6-(pyridoxal phosphate)lysine. Thr-352 serves as a coordination point for substrate.

The protein belongs to the class-II pyridoxal-phosphate-dependent aminotransferase family. BioF subfamily. Homodimer. Pyridoxal 5'-phosphate serves as cofactor.

The enzyme catalyses 6-carboxyhexanoyl-[ACP] + L-alanine + H(+) = (8S)-8-amino-7-oxononanoate + holo-[ACP] + CO2. The protein operates within cofactor biosynthesis; biotin biosynthesis. In terms of biological role, catalyzes the decarboxylative condensation of pimeloyl-[acyl-carrier protein] and L-alanine to produce 8-amino-7-oxononanoate (AON), [acyl-carrier protein], and carbon dioxide. This Glaesserella parasuis serovar 5 (strain SH0165) (Haemophilus parasuis) protein is Putative 8-amino-7-oxononanoate synthase (bioF).